We begin with the raw amino-acid sequence, 206 residues long: Large ribosomal subunit protein uL4 (206 aa).

The interval 63 to 97 (MYKQKGTGRARHHSARAPQFRGGGKAHGPVVRSHE) is disordered. Basic residues predominate over residues 64-77 (YKQKGTGRARHHSA).

Belongs to the universal ribosomal protein uL4 family. As to quaternary structure, part of the 50S ribosomal subunit.

Its function is as follows. One of the primary rRNA binding proteins, this protein initially binds near the 5'-end of the 23S rRNA. It is important during the early stages of 50S assembly. It makes multiple contacts with different domains of the 23S rRNA in the assembled 50S subunit and ribosome. In terms of biological role, forms part of the polypeptide exit tunnel. This Rhizobium etli (strain CIAT 652) protein is Large ribosomal subunit protein uL4.